The sequence spans 150 residues: D-aminoacyl-tRNA deacylase (150 aa).

The short motif at 136–137 is the Gly-cisPro motif, important for rejection of L-amino acids element; the sequence is GP.

The protein belongs to the DTD family. In terms of assembly, homodimer.

It localises to the cytoplasm. It carries out the reaction glycyl-tRNA(Ala) + H2O = tRNA(Ala) + glycine + H(+). The enzyme catalyses a D-aminoacyl-tRNA + H2O = a tRNA + a D-alpha-amino acid + H(+). In terms of biological role, an aminoacyl-tRNA editing enzyme that deacylates mischarged D-aminoacyl-tRNAs. Also deacylates mischarged glycyl-tRNA(Ala), protecting cells against glycine mischarging by AlaRS. Acts via tRNA-based rather than protein-based catalysis; rejects L-amino acids rather than detecting D-amino acids in the active site. By recycling D-aminoacyl-tRNA to D-amino acids and free tRNA molecules, this enzyme counteracts the toxicity associated with the formation of D-aminoacyl-tRNA entities in vivo and helps enforce protein L-homochirality. The protein is D-aminoacyl-tRNA deacylase of Staphylococcus saprophyticus subsp. saprophyticus (strain ATCC 15305 / DSM 20229 / NCIMB 8711 / NCTC 7292 / S-41).